The chain runs to 117 residues: Large ribosomal subunit protein uL24 (117 aa).

The protein belongs to the universal ribosomal protein uL24 family. As to quaternary structure, part of the 50S ribosomal subunit.

Its function is as follows. One of two assembly initiator proteins, it binds directly to the 5'-end of the 23S rRNA, where it nucleates assembly of the 50S subunit. Functionally, one of the proteins that surrounds the polypeptide exit tunnel on the outside of the subunit. This Nostoc punctiforme (strain ATCC 29133 / PCC 73102) protein is Large ribosomal subunit protein uL24.